Reading from the N-terminus, the 368-residue chain is tRNA-specific 2-thiouridylase MnmA (368 aa).

Residues 23–30 and Leu49 contribute to the ATP site; that span reads ALSGGVDS. Cys110 acts as the Nucleophile in catalysis. Cys110 and Cys209 are disulfide-bonded. Gly135 lines the ATP pocket. Positions 159-161 are interaction with tRNA; it reads KDQ. Cys209 acts as the Cysteine persulfide intermediate in catalysis. The interaction with tRNA stretch occupies residues 314–315; the sequence is RY.

Belongs to the MnmA/TRMU family.

The protein resides in the cytoplasm. The catalysed reaction is S-sulfanyl-L-cysteinyl-[protein] + uridine(34) in tRNA + AH2 + ATP = 2-thiouridine(34) in tRNA + L-cysteinyl-[protein] + A + AMP + diphosphate + H(+). Its function is as follows. Catalyzes the 2-thiolation of uridine at the wobble position (U34) of tRNA, leading to the formation of s(2)U34. The polypeptide is tRNA-specific 2-thiouridylase MnmA (Synechococcus sp. (strain JA-2-3B'a(2-13)) (Cyanobacteria bacterium Yellowstone B-Prime)).